The following is a 205-amino-acid chain: Imidazole glycerol phosphate synthase subunit HisH (205 aa).

Residues 1-205 (MIALVDYGGG…FFKMALGDKK (205 aa)) enclose the Glutamine amidotransferase type-1 domain. The Nucleophile role is filled by Cys-79. Residues His-181 and Glu-183 contribute to the active site.

As to quaternary structure, heterodimer of HisH and HisF.

The protein resides in the cytoplasm. It catalyses the reaction 5-[(5-phospho-1-deoxy-D-ribulos-1-ylimino)methylamino]-1-(5-phospho-beta-D-ribosyl)imidazole-4-carboxamide + L-glutamine = D-erythro-1-(imidazol-4-yl)glycerol 3-phosphate + 5-amino-1-(5-phospho-beta-D-ribosyl)imidazole-4-carboxamide + L-glutamate + H(+). The enzyme catalyses L-glutamine + H2O = L-glutamate + NH4(+). It participates in amino-acid biosynthesis; L-histidine biosynthesis; L-histidine from 5-phospho-alpha-D-ribose 1-diphosphate: step 5/9. Its function is as follows. IGPS catalyzes the conversion of PRFAR and glutamine to IGP, AICAR and glutamate. The HisH subunit catalyzes the hydrolysis of glutamine to glutamate and ammonia as part of the synthesis of IGP and AICAR. The resulting ammonia molecule is channeled to the active site of HisF. The polypeptide is Imidazole glycerol phosphate synthase subunit HisH (Dehalococcoides mccartyi (strain ATCC BAA-2266 / KCTC 15142 / 195) (Dehalococcoides ethenogenes (strain 195))).